Reading from the N-terminus, the 210-residue chain is uncharacterized protein (210 aa).

A signal peptide spans 1 to 20 (MRVITLSGITLFLLASLASA). At 21–175 (IELTFKLENQ…YSTVKSTQAR (155 aa)) the chain is on the lumenal side. The 84-residue stretch at 32 to 115 (KQCYYLDSFH…DKIVTMEITM (84 aa)) folds into the GOLD domain. An N-linked (GlcNAc...) asparagine glycan is attached at Asn165. A helical transmembrane segment spans residues 176 to 196 (IFWFSLAESIMVVALSALQVF). Topologically, residues 197 to 210 (IVKTFFKRSGRRGV) are cytoplasmic.

This sequence belongs to the EMP24/GP25L family.

The protein resides in the endoplasmic reticulum membrane. This is an uncharacterized protein from Schizosaccharomyces pombe (strain 972 / ATCC 24843) (Fission yeast).